The primary structure comprises 427 residues: Enolase (427 aa).

Gln163 is a binding site for (2R)-2-phosphoglycerate. Glu205 (proton donor) is an active-site residue. Mg(2+) is bound by residues Asp242, Glu285, and Asp312. Lys337, Arg366, Ser367, and Lys388 together coordinate (2R)-2-phosphoglycerate. Catalysis depends on Lys337, which acts as the Proton acceptor.

Belongs to the enolase family. The cofactor is Mg(2+).

It localises to the cytoplasm. Its subcellular location is the secreted. The protein resides in the cell surface. It catalyses the reaction (2R)-2-phosphoglycerate = phosphoenolpyruvate + H2O. Its pathway is carbohydrate degradation; glycolysis; pyruvate from D-glyceraldehyde 3-phosphate: step 4/5. In terms of biological role, catalyzes the reversible conversion of 2-phosphoglycerate (2-PG) into phosphoenolpyruvate (PEP). It is essential for the degradation of carbohydrates via glycolysis. The sequence is that of Enolase from Dechloromonas aromatica (strain RCB).